A 92-amino-acid chain; its full sequence is Small ribosomal subunit protein uS19 (92 aa).

Positions Glu73–Arg92 are disordered.

It belongs to the universal ribosomal protein uS19 family.

Protein S19 forms a complex with S13 that binds strongly to the 16S ribosomal RNA. The polypeptide is Small ribosomal subunit protein uS19 (Maricaulis maris (strain MCS10) (Caulobacter maris)).